A 490-amino-acid chain; its full sequence is Glutamyl-tRNA(Gln) amidotransferase subunit A (490 aa).

Residues lysine 77 and serine 152 each act as charge relay system in the active site. Serine 176 acts as the Acyl-ester intermediate in catalysis.

This sequence belongs to the amidase family. GatA subfamily. In terms of assembly, heterotrimer of A, B and C subunits.

It carries out the reaction L-glutamyl-tRNA(Gln) + L-glutamine + ATP + H2O = L-glutaminyl-tRNA(Gln) + L-glutamate + ADP + phosphate + H(+). Functionally, allows the formation of correctly charged Gln-tRNA(Gln) through the transamidation of misacylated Glu-tRNA(Gln) in organisms which lack glutaminyl-tRNA synthetase. The reaction takes place in the presence of glutamine and ATP through an activated gamma-phospho-Glu-tRNA(Gln). In Limosilactobacillus reuteri (strain DSM 20016) (Lactobacillus reuteri), this protein is Glutamyl-tRNA(Gln) amidotransferase subunit A.